The sequence spans 689 residues: Beta-adrenergic receptor kinase 1 (689 aa).

The tract at residues 1 to 190 is N-terminal; that stretch reads MADLEAVLAD…ELNIHLTMND (190 aa). In terms of domain architecture, RGS spans 54–175; the sequence is TFEKIFSQKL…IESDKFTRFC (122 aa). The Protein kinase domain occupies 191 to 453; sequence FSVHRIIGRG…AQEVKESPFF (263 aa). ATP contacts are provided by residues 197–205 and Lys220; that span reads IGRGGFGEV. The active-site Proton acceptor is Asp317. An AGC-kinase C-terminal domain is found at 454–521; it reads RSLDWQMVFL…TISERWQQEV (68 aa). A PH domain is found at 558–652; that stretch reads DCIVHGYMSK…WKKELRDAYR (95 aa). Phosphoserine is present on Ser670.

It belongs to the protein kinase superfamily. AGC Ser/Thr protein kinase family. GPRK subfamily. Interacts with the heterodimer formed by GNB1 and GNG2. Interacts with GIT1. Interacts with, and phosphorylates chemokine-stimulated CCR5. Interacts with ARRB1. Interacts with LPAR1 and LPAR2. Interacts with RALA in response to LPAR1 activation. ADRBK1 and RALA mutually inhibit each other's binding to LPAR1. Interacts with ADRB2.

Its subcellular location is the cytoplasm. It localises to the cell membrane. The protein resides in the postsynapse. It is found in the presynapse. It catalyses the reaction [beta-adrenergic receptor] + ATP = [beta-adrenergic receptor]-phosphate + ADP + H(+). Its activity is regulated as follows. In contrast to other AGC family kinases, the catalytic activity is solely regulated by the binding of substrates and ligands, not by phosphorylation of the kinase domain. Functionally, specifically phosphorylates the agonist-occupied form of the beta-adrenergic and closely related receptors, probably inducing a desensitization of them. Key regulator of LPAR1 signaling. Competes with RALA for binding to LPAR1 thus affecting the signaling properties of the receptor. Desensitizes LPAR1 and LPAR2 in a phosphorylation-independent manner. Positively regulates ciliary smoothened (SMO)-dependent Hedgehog (Hh) signaling pathway by facilitating the trafficking of SMO into the cilium and the stimulation of SMO activity. Inhibits relaxation of airway smooth muscle in response to blue light. The polypeptide is Beta-adrenergic receptor kinase 1 (Mus musculus (Mouse)).